The primary structure comprises 1394 residues: ATP-dependent permease AUS1 (1394 aa).

Residues 1 to 420 (MSISKYFTPV…PLTTIGSYSR (420 aa)) are Cytoplasmic-facing. Residues 33–273 (KKSYDAEDSM…FRDTLGIEKD (241 aa)) form the ABC transporter 1 domain. 6 helical membrane passes run 421 to 443 (GSLT…PIAF), 468 to 490 (TVFD…YFLA), 497 to 519 (ARFF…LFAL), 529 to 551 (VANL…VIYL), 558 to 575 (FVWI…EAIL), and 636 to 658 (VWRN…LFAS). The Cytoplasmic segment spans residues 659–1080 (QYIKPYFNKD…QYICTKRDMT (422 aa)). Residues 751–978 (ISWKNINYTV…YFMSHDNTLV (228 aa)) form the ABC transporter 2 domain. Residue 782–789 (GESGAGKT) participates in ATP binding. The next 6 helical transmembrane spans lie at 1081–1103 (YVMA…FWHI), 1107–1129 (IIGL…PLIN), 1156–1178 (VLLL…LFFV), 1193–1215 (AGVF…LWLI), 1224–1246 (AAVF…QPYS), and 1346–1368 (FGIE…YLTY). Residues 1369–1394 (VARIWPKVFKIITKVIPHRGKKPVQN) lie on the Cytoplasmic side of the membrane.

This sequence belongs to the ABC transporter superfamily. ABCG family. PDR (TC 3.A.1.205) subfamily.

Its subcellular location is the membrane. Functionally, transporter involved in the uptake of sterol. This is ATP-dependent permease AUS1 (AUS1) from Saccharomyces cerevisiae (strain ATCC 204508 / S288c) (Baker's yeast).